The chain runs to 178 residues: CASP-like protein 5A1 (178 aa).

Residues Met-1 to Thr-24 are disordered. Residues Met-1–Thr-37 lie on the Cytoplasmic side of the membrane. Residues Ala-38–Met-58 traverse the membrane as a helical segment. Topologically, residues Ala-59–Ala-69 are extracellular. The helical transmembrane segment at Phe-70–Val-90 threads the bilayer. The Cytoplasmic segment spans residues Asp-91–Arg-105. Residues Ala-106–Cys-126 traverse the membrane as a helical segment. Residues Ser-127 to Thr-152 lie on the Extracellular side of the membrane. The chain crosses the membrane as a helical span at residues Ala-153–Trp-173. The Cytoplasmic segment spans residues Ser-174–Arg-178.

The protein belongs to the Casparian strip membrane proteins (CASP) family. Homodimer and heterodimers.

It localises to the cell membrane. In Brachypodium distachyon (Purple false brome), this protein is CASP-like protein 5A1.